The following is a 273-amino-acid chain: Ribosomal RNA small subunit methyltransferase A (273 aa).

S-adenosyl-L-methionine is bound by residues Asn-18, Leu-20, Gly-45, Glu-66, Asp-91, and Asn-113.

It belongs to the class I-like SAM-binding methyltransferase superfamily. rRNA adenine N(6)-methyltransferase family. RsmA subfamily.

The protein resides in the cytoplasm. It catalyses the reaction adenosine(1518)/adenosine(1519) in 16S rRNA + 4 S-adenosyl-L-methionine = N(6)-dimethyladenosine(1518)/N(6)-dimethyladenosine(1519) in 16S rRNA + 4 S-adenosyl-L-homocysteine + 4 H(+). In terms of biological role, specifically dimethylates two adjacent adenosines (A1518 and A1519) in the loop of a conserved hairpin near the 3'-end of 16S rRNA in the 30S particle. May play a critical role in biogenesis of 30S subunits. The protein is Ribosomal RNA small subunit methyltransferase A of Shigella boydii serotype 18 (strain CDC 3083-94 / BS512).